A 228-amino-acid chain; its full sequence is Phosphoribosylformylglycinamidine synthase subunit PurQ (228 aa).

The Glutamine amidotransferase type-1 domain maps to 3-226 (FAVIVFPGSN…VKYWRETHVV (224 aa)). The active-site Nucleophile is cysteine 86. Catalysis depends on residues histidine 195 and glutamate 197.

As to quaternary structure, part of the FGAM synthase complex composed of 1 PurL, 1 PurQ and 2 PurS subunits.

The protein resides in the cytoplasm. The enzyme catalyses N(2)-formyl-N(1)-(5-phospho-beta-D-ribosyl)glycinamide + L-glutamine + ATP + H2O = 2-formamido-N(1)-(5-O-phospho-beta-D-ribosyl)acetamidine + L-glutamate + ADP + phosphate + H(+). It carries out the reaction L-glutamine + H2O = L-glutamate + NH4(+). It participates in purine metabolism; IMP biosynthesis via de novo pathway; 5-amino-1-(5-phospho-D-ribosyl)imidazole from N(2)-formyl-N(1)-(5-phospho-D-ribosyl)glycinamide: step 1/2. Functionally, part of the phosphoribosylformylglycinamidine synthase complex involved in the purines biosynthetic pathway. Catalyzes the ATP-dependent conversion of formylglycinamide ribonucleotide (FGAR) and glutamine to yield formylglycinamidine ribonucleotide (FGAM) and glutamate. The FGAM synthase complex is composed of three subunits. PurQ produces an ammonia molecule by converting glutamine to glutamate. PurL transfers the ammonia molecule to FGAR to form FGAM in an ATP-dependent manner. PurS interacts with PurQ and PurL and is thought to assist in the transfer of the ammonia molecule from PurQ to PurL. The polypeptide is Phosphoribosylformylglycinamidine synthase subunit PurQ (Geobacillus sp. (strain WCH70)).